Consider the following 174-residue polypeptide: Probable E3 ubiquitin-protein ligase RHA4A (174 aa).

The RING-type; atypical zinc finger occupies 105 to 147; that stretch reads CCVCLGEFELKEELVEMPLCKHIFHLDCIHLWLYSHNTCPLCR. Residues 155 to 174 are disordered; sequence TKTSVDDDNDHPDSPQTSPV.

As to expression, expressed in stems, flowers, cauline leaves and roots.

The catalysed reaction is S-ubiquitinyl-[E2 ubiquitin-conjugating enzyme]-L-cysteine + [acceptor protein]-L-lysine = [E2 ubiquitin-conjugating enzyme]-L-cysteine + N(6)-ubiquitinyl-[acceptor protein]-L-lysine.. Its pathway is protein modification; protein ubiquitination. Its function is as follows. Probable E3 ubiquitin-protein ligase that may possess E3 ubiquitin ligase activity in vitro. In Arabidopsis thaliana (Mouse-ear cress), this protein is Probable E3 ubiquitin-protein ligase RHA4A.